The primary structure comprises 130 residues: Small ribosomal subunit protein uS9 (130 aa).

Belongs to the universal ribosomal protein uS9 family.

This Aeromonas salmonicida (strain A449) protein is Small ribosomal subunit protein uS9.